The primary structure comprises 304 residues: MINQKEGFKSGFVSIIGRPNVGKSTLLNHVIGQKIAIMSDKPQTTRNKIQGVYTSEDSQIVFIDTPGIHKPKHKLGDFMMKVAQNTLKEVDLILYVVDGAEAFGPGEEFIIERLKEAKTPVILVINKIDKVHPDDLLSLIETYRHKHEFEEVVPVSALQGNNVPTLLLEITKHLSEGPQYYPSDQVTDHPERFVIAELIREKVLHLTREEIPHSIAVVIEQIKRRQHQDTVYIGATIVVERSSQKGIIIGKQGKMLKEVGQQARADIEALLGSKVFLELWVKVQKDWRNKPQHLRDYGFREDEY.

Residues 9–176 (KSGFVSIIGR…LLEITKHLSE (168 aa)) enclose the Era-type G domain. The G1 stretch occupies residues 17 to 24 (GRPNVGKS). 17–24 (GRPNVGKS) is a binding site for GTP. The segment at 43–47 (QTTRN) is G2. Residues 64–67 (DTPG) form a G3 region. Residues 64 to 68 (DTPGI) and 126 to 129 (NKID) each bind GTP. The interval 126-129 (NKID) is G4. The segment at 155–157 (VSA) is G5. A KH type-2 domain is found at 199-285 (IREKVLHLTR…FLELWVKVQK (87 aa)).

Belongs to the TRAFAC class TrmE-Era-EngA-EngB-Septin-like GTPase superfamily. Era GTPase family. As to quaternary structure, monomer.

The protein resides in the cytoplasm. It localises to the cell membrane. In terms of biological role, an essential GTPase that binds both GDP and GTP, with rapid nucleotide exchange. Plays a role in 16S rRNA processing and 30S ribosomal subunit biogenesis and possibly also in cell cycle regulation and energy metabolism. The chain is GTPase Era from Halalkalibacterium halodurans (strain ATCC BAA-125 / DSM 18197 / FERM 7344 / JCM 9153 / C-125) (Bacillus halodurans).